The primary structure comprises 483 residues: Regulatory protein ViaA (483 aa).

It belongs to the ViaA family. Homodimer. Interacts with RavA.

Its subcellular location is the cytoplasm. Functionally, component of the RavA-ViaA chaperone complex, which may act on the membrane to optimize the function of some of the respiratory chains. ViaA stimulates the ATPase activity of RavA. In Cronobacter sakazakii (strain ATCC BAA-894) (Enterobacter sakazakii), this protein is Regulatory protein ViaA.